We begin with the raw amino-acid sequence, 849 residues long: MRVKGIQRNWQHLWKWGTLILGLVIICSASDNLWVTVYYGVPVWEDADTPLFCASDAKSYSSEKHNVWATHACVPTDPNPQEIAIENVTENFNMWKNNMVEQMQEDIISLWEESLKPCVKLTPLCITLNCTNVNSANHTEANNTVENKEEIKNCSFKITTERGGKKKEEYALFYKLDVVPISNGNKTSYRLIHCNVSTIKQACPKVNFDPIPIHYCAPAGFAILKCRDKEYNGTGPCKNVSTVQCTHGIKPVVSTQLLLNGSLAEEDIRIRSENFTDNTKVIIVQLNNSIEINCIRPNNNTRKSIPIGPGQAFYATGDIIGDIRQAHCNVSRIKWREMLKNVTAQLRKIYNNKNITFNSSAGGDLEITTHSFNCRGEFFYCNTSGLFNNNISNINNETITLPCKIKQIVRMWQKVGQAMYALPIAGNLVCKSNITGLILTRDGGNNNDSTEETFRPGGGDMRDNWRSELYKYKTVKIKSLGVAPTRARRRVVEREKRAVGLGAVFLGFLGAAGSTMGAASITLTAQVRQLLSGIVQQQSNLLRAIEAQQHLLQLTVWGIKQLQSRVLAIERYLKDQQLLGIWGCSGKLICTTNVPWNTSWSNKSYNEIWDNMTWLEWEREIHNYTQHIYSLIEESQNQQEKNEQDLLALDKWASLWNWFDISNWLWYIRIFIMIVGGLIGLRIVFAVLSIVNRVRQGYSPLSFQTLTHHQREPDRLGKTEEGGGEQDRDRSTRLVSGFLALAWDDLRSLCLFSYHRLRDLVLIAARTVELLGRSSLKGLRLGWEGLKYLWNLLLYWGRELKNSAINLLDTIAIATANGTDRVIEVAQRAYRAILNVPTRIRQGLERALL.

Positions 1–31 (MRVKGIQRNWQHLWKWGTLILGLVIICSASD) are cleaved as a signal peptide. The Extracellular portion of the chain corresponds to 32–670 (NLWVTVYYGV…ISNWLWYIRI (639 aa)). A disulfide bridge links cysteine 53 with cysteine 73. N-linked (GlcNAc...) asparagine; by host glycosylation is found at asparagine 87, asparagine 129, asparagine 137, asparagine 142, asparagine 153, asparagine 185, asparagine 195, asparagine 232, asparagine 239, asparagine 260, asparagine 274, asparagine 287, asparagine 299, asparagine 329, asparagine 341, asparagine 354, and asparagine 358. Intrachain disulfides connect cysteine 118–cysteine 203, cysteine 125–cysteine 194, cysteine 130–cysteine 154, cysteine 216–cysteine 245, and cysteine 226–cysteine 237. Residues 130-153 (CTNVNSANHTEANNTVENKEEIKN) are V1. The interval 154–194 (CSFKITTERGGKKKEEYALFYKLDVVPISNGNKTSYRLIHC) is V2. The interval 294–327 (CIRPNNNTRKSIPIGPGQAFYATGDIIGDIRQAH) is V3. An intrachain disulfide couples cysteine 294 to cysteine 328. A CD4-binding loop region spans residues 360 to 370 (SAGGDLEITTH). 2 disulfides stabilise this stretch: cysteine 374–cysteine 430 and cysteine 381–cysteine 403. The interval 381–403 (CNTSGLFNNNISNINNETITLPC) is V4. Residues asparagine 382, asparagine 390, asparagine 396, asparagine 433, and asparagine 447 are each glycosylated (N-linked (GlcNAc...) asparagine; by host). 2 V5 regions span residues 446–457 (NNDSTEETFRPG) and 448–457 (DSTEETFRPG). A fusion peptide region spans residues 498–518 (AVGLGAVFLGFLGAAGSTMGA). Residues 560–578 (KQLQSRVLAIERYLKDQQL) form an immunosuppression region. A disulfide bridge links cysteine 584 with cysteine 590. N-linked (GlcNAc...) asparagine; by host glycosylation is found at asparagine 597, asparagine 602, asparagine 611, and asparagine 623. The stretch at 619–653 (REIHNYTQHIYSLIEESQNQQEKNEQDLLALDKWA) forms a coiled coil. Positions 648 to 669 (ALDKWASLWNWFDISNWLWYIR) are MPER; binding to GalCer. Residues 671–691 (FIMIVGGLIGLRIVFAVLSIV) traverse the membrane as a helical segment. Topologically, residues 692-849 (NRVRQGYSPL…IRQGLERALL (158 aa)) are cytoplasmic. The YXXL motif; contains endocytosis signal motif lies at 698–701 (YSPL). The tract at residues 709–729 (HQREPDRLGKTEEGGGEQDRD) is disordered. The S-palmitoyl cysteine; by host moiety is linked to residue cysteine 750. Positions 848–849 (LL) match the Di-leucine internalization motif motif.

It belongs to the HIV-1 env protein family. As to quaternary structure, the mature envelope protein (Env) consists of a homotrimer of non-covalently associated gp120-gp41 heterodimers. The resulting complex protrudes from the virus surface as a spike. There seems to be as few as 10 spikes on the average virion. Interacts with host CD4, CCR5 and CXCR4. Gp120 also interacts with the C-type lectins CD209/DC-SIGN and CLEC4M/DC-SIGNR (collectively referred to as DC-SIGN(R)). Gp120 and gp41 interact with GalCer. Gp120 interacts with host ITGA4/ITGB7 complex; on CD4+ T-cells, this interaction results in rapid activation of integrin ITGAL/LFA-1, which facilitates efficient cell-to-cell spreading of HIV-1. Gp120 interacts with cell-associated heparan sulfate; this interaction increases virus infectivity on permissive cells and may be involved in infection of CD4- cells. The mature envelope protein (Env) consists of a homotrimer of non-covalently associated gp120-gp41 heterodimers. The resulting complex protrudes from the virus surface as a spike. There seems to be as few as 10 spikes on the average virion. Post-translationally, highly glycosylated by host. The high number of glycan on the protein is reffered to as 'glycan shield' because it contributes to hide protein sequence from adaptive immune system. In terms of processing, palmitoylation of the transmembrane protein and of Env polyprotein (prior to its proteolytic cleavage) is essential for their association with host cell membrane lipid rafts. Palmitoylation is therefore required for envelope trafficking to classical lipid rafts, but not for viral replication. Specific enzymatic cleavages in vivo yield mature proteins. Envelope glycoproteins are synthesized as an inactive precursor that is heavily N-glycosylated and processed likely by host cell furin in the Golgi to yield the mature SU and TM proteins. The cleavage site between SU and TM requires the minimal sequence [KR]-X-[KR]-R. About 2 of the 9 disulfide bonds of gp41 are reduced by P4HB/PDI, following binding to CD4 receptor.

Its subcellular location is the virion membrane. It localises to the host cell membrane. The protein resides in the host endosome membrane. Functionally, oligomerizes in the host endoplasmic reticulum into predominantly trimers. In a second time, gp160 transits in the host Golgi, where glycosylation is completed. The precursor is then proteolytically cleaved in the trans-Golgi and thereby activated by cellular furin or furin-like proteases to produce gp120 and gp41. Attaches the virus to the host lymphoid cell by binding to the primary receptor CD4. This interaction induces a structural rearrangement creating a high affinity binding site for a chemokine coreceptor like CXCR4 and/or CCR5. Acts as a ligand for CD209/DC-SIGN and CLEC4M/DC-SIGNR, which are respectively found on dendritic cells (DCs), and on endothelial cells of liver sinusoids and lymph node sinuses. These interactions allow capture of viral particles at mucosal surfaces by these cells and subsequent transmission to permissive cells. HIV subverts the migration properties of dendritic cells to gain access to CD4+ T-cells in lymph nodes. Virus transmission to permissive T-cells occurs either in trans (without DCs infection, through viral capture and transmission), or in cis (following DCs productive infection, through the usual CD4-gp120 interaction), thereby inducing a robust infection. In trans infection, bound virions remain infectious over days and it is proposed that they are not degraded, but protected in non-lysosomal acidic organelles within the DCs close to the cell membrane thus contributing to the viral infectious potential during DCs' migration from the periphery to the lymphoid tissues. On arrival at lymphoid tissues, intact virions recycle back to DCs' cell surface allowing virus transmission to CD4+ T-cells. Its function is as follows. Acts as a class I viral fusion protein. Under the current model, the protein has at least 3 conformational states: pre-fusion native state, pre-hairpin intermediate state, and post-fusion hairpin state. During fusion of viral and target intracellular membranes, the coiled coil regions (heptad repeats) assume a trimer-of-hairpins structure, positioning the fusion peptide in close proximity to the C-terminal region of the ectodomain. The formation of this structure appears to drive apposition and subsequent fusion of viral and target cell membranes. Complete fusion occurs in host cell endosomes and is dynamin-dependent, however some lipid transfer might occur at the plasma membrane. The virus undergoes clathrin-dependent internalization long before endosomal fusion, thus minimizing the surface exposure of conserved viral epitopes during fusion and reducing the efficacy of inhibitors targeting these epitopes. Membranes fusion leads to delivery of the nucleocapsid into the cytoplasm. This Human immunodeficiency virus type 1 group M subtype G (isolate 92NG083) (HIV-1) protein is Envelope glycoprotein gp160.